Consider the following 470-residue polypeptide: Ribosomal protein uS12 methylthiotransferase RimO (470 aa).

The region spanning 20-131 is the MTTase N-terminal domain; sequence PTVAFAHLGC…IVEVLQQVEA (112 aa). Positions 29, 65, 94, 169, 173, and 176 each coordinate [4Fe-4S] cluster. Residues 155–384 enclose the Radical SAM core domain; sequence TTGEAVAYLK…MTLQQPISAA (230 aa). Residues 387 to 458 enclose the TRAM domain; sequence ASWIGKTVDV…IYDLSGHVVS (72 aa).

Belongs to the methylthiotransferase family. RimO subfamily. Requires [4Fe-4S] cluster as cofactor.

Its subcellular location is the cytoplasm. It carries out the reaction L-aspartate(89)-[ribosomal protein uS12]-hydrogen + (sulfur carrier)-SH + AH2 + 2 S-adenosyl-L-methionine = 3-methylsulfanyl-L-aspartate(89)-[ribosomal protein uS12]-hydrogen + (sulfur carrier)-H + 5'-deoxyadenosine + L-methionine + A + S-adenosyl-L-homocysteine + 2 H(+). Functionally, catalyzes the methylthiolation of an aspartic acid residue of ribosomal protein uS12. This Synechococcus sp. (strain CC9311) protein is Ribosomal protein uS12 methylthiotransferase RimO.